Here is a 695-residue protein sequence, read N- to C-terminus: Glycine--tRNA ligase beta subunit (695 aa).

The protein belongs to the class-II aminoacyl-tRNA synthetase family. As to quaternary structure, tetramer of two alpha and two beta subunits.

The protein localises to the cytoplasm. The enzyme catalyses tRNA(Gly) + glycine + ATP = glycyl-tRNA(Gly) + AMP + diphosphate. In Desulforamulus reducens (strain ATCC BAA-1160 / DSM 100696 / MI-1) (Desulfotomaculum reducens), this protein is Glycine--tRNA ligase beta subunit.